The following is a 521-amino-acid chain: MIKQALISVSDKTGIVDFAKALSALGVKLLSTGGTAKLLADAGLPVTEVADYTGFPEMLDGRVKTLHPKVHGGILARRDLPEHMQALEAHGIPTIDLLVVNLYPFVQTIAKDDCTLADAIENIDIGGPTMLRSAAKNHRDVTVVVDPADYAVVLDEMKANGNTLGYKTNFRLATKVFAHTAQYDGAITNYLTSLGDDLQHGSRSAYPATLNLAFDKVQDLRYGENPHQSAAFYRDVATPAGALANYRQLQGKELSYNNIADSDAAWECVKTFDAPACVIIKHANPCGVAVGADAGEAYAKAFQTDPTSAFGGIIAFNREVDEAAAQAVAKQFVEVLIAPSFSDAAKQVFVAKQNVRLLEIALGEGHNAFDLKRVGGGLLVQSLDSKNVQPRELRVVTKRHPTPKEMDDLLFAWRVAKYVKSNAIVFCGNGMTLGVGAGQMSRVDSARIASIKAQNAGLTLAGSAVASDAFFPFRDGLDVVVAAGATCVIQPGGSVRDDEVIAAADEHNIAMVVTGVRHFRH.

The MGS-like domain occupies 1–145 (MIKQALISVS…KNHRDVTVVV (145 aa)).

Belongs to the PurH family.

It carries out the reaction (6R)-10-formyltetrahydrofolate + 5-amino-1-(5-phospho-beta-D-ribosyl)imidazole-4-carboxamide = 5-formamido-1-(5-phospho-D-ribosyl)imidazole-4-carboxamide + (6S)-5,6,7,8-tetrahydrofolate. The catalysed reaction is IMP + H2O = 5-formamido-1-(5-phospho-D-ribosyl)imidazole-4-carboxamide. Its pathway is purine metabolism; IMP biosynthesis via de novo pathway; 5-formamido-1-(5-phospho-D-ribosyl)imidazole-4-carboxamide from 5-amino-1-(5-phospho-D-ribosyl)imidazole-4-carboxamide (10-formyl THF route): step 1/1. It functions in the pathway purine metabolism; IMP biosynthesis via de novo pathway; IMP from 5-formamido-1-(5-phospho-D-ribosyl)imidazole-4-carboxamide: step 1/1. This is Bifunctional purine biosynthesis protein PurH from Burkholderia pseudomallei (strain 1710b).